Here is a 519-residue protein sequence, read N- to C-terminus: Molybdate transporter 1 (519 aa).

7 consecutive transmembrane segments (helical) span residues Leu-98–Ile-118, Leu-164–Leu-184, Ala-370–Cys-390, Ile-412–Leu-432, Phe-436–Val-456, Gly-464–Gly-484, and Phe-485–Ala-505.

Belongs to the SLC26A/SulP transporter (TC 2.A.53) family.

It localises to the membrane. With respect to regulation, 60% inhibition by 20 uM tungstate or by lack of glucose in the medium, but no inhibition by sulfate. Its function is as follows. High affinity molybdate transporter. Acts through an energy-dependent process. In Chlamydomonas reinhardtii (Chlamydomonas smithii), this protein is Molybdate transporter 1 (MOT1).